A 101-amino-acid chain; its full sequence is Small ribosomal subunit protein uS14 (101 aa).

This sequence belongs to the universal ribosomal protein uS14 family. In terms of assembly, part of the 30S ribosomal subunit. Contacts proteins S3 and S10.

Binds 16S rRNA, required for the assembly of 30S particles and may also be responsible for determining the conformation of the 16S rRNA at the A site. The polypeptide is Small ribosomal subunit protein uS14 (Psychromonas ingrahamii (strain DSM 17664 / CCUG 51855 / 37)).